The primary structure comprises 201 residues: Cytochrome c oxidase subunit 3 (201 aa).

4 helical membrane-spanning segments follow: residues Val25–Ala45, Leu65–Gly85, Trp100–Leu120, and Val137–Ile157.

Belongs to the cytochrome c oxidase subunit 3 family.

It localises to the cell membrane. It carries out the reaction 4 Fe(II)-[cytochrome c] + O2 + 8 H(+)(in) = 4 Fe(III)-[cytochrome c] + 2 H2O + 4 H(+)(out). The polypeptide is Cytochrome c oxidase subunit 3 (ctaE) (Thermostichus vulcanus (Synechococcus vulcanus)).